The sequence spans 247 residues: UPF0309 protein lin2794 (247 aa).

The 184-residue stretch at 31–214 (VAESIENDGV…EKMVNDNFTP (184 aa)) folds into the SIS domain.

The protein belongs to the UPF0309 family.

The chain is UPF0309 protein lin2794 from Listeria innocua serovar 6a (strain ATCC BAA-680 / CLIP 11262).